Reading from the N-terminus, the 163-residue chain is tRNA-acetylating toxin 2 (163 aa).

Residue Y137 is part of the active site.

Belongs to the acetyltransferase family. GNAT subfamily. As to quaternary structure, homodimer. Forms a complex with cognate antitoxin TacA2.

It carries out the reaction glycyl-tRNA(Gly) + acetyl-CoA = N-acetylglycyl-tRNA(Gly) + CoA + H(+). The catalysed reaction is L-isoleucyl-tRNA(Ile) + acetyl-CoA = N-acetyl-L-isoleucyl-tRNA(Ile) + CoA + H(+). The enzyme catalyses L-leucyl-tRNA(Leu) + acetyl-CoA = N-acetyl-L-leucyl-tRNA(Leu) + CoA + H(+). Toxic component of a type II toxin-antitoxin (TA) system. Acetylates tRNA and inhibits translation. Acetylates mainly Gly and Ile/Leu in vitro. Overexpression during the lag phase of a tacA2-tacT2 deletion strain leads to a 100-fold increase in persister cells in the presence of cefotaxime and a non-growth state in the absence of antibiotic. This protein, which has a single amino acid compared to S.typhimurium strain 14028s (Lys-29 is Glu in 14028s), produces 100-fold more persister cells, has much higher acetylation activity and binds tRNA much better. Persister cell formation and the growth defect are neutralized by cognate antitoxin TacA2. Its function is as follows. The TacA2-TacT2 complex both represses and derepresses expression of its own operon. This Salmonella enteritidis protein is tRNA-acetylating toxin 2.